Consider the following 112-residue polypeptide: DNA-directed RNA polymerases I and III subunit RPAC2 (112 aa).

This sequence belongs to the archaeal Rpo11/eukaryotic RPB11/RPC19 RNA polymerase subunit family. As to quaternary structure, component of the RNA polymerase I (Pol I) and RNA polymerase III (Pol III) complexes consisting of at least 13 and 17 subunits, respectively.

The protein localises to the nucleus. In terms of biological role, DNA-dependent RNA polymerase catalyzes the transcription of DNA into RNA using the four ribonucleoside triphosphates as substrates. Common core component of RNA polymerases I and III which synthesize ribosomal RNA precursors and small RNAs, such as 5S rRNA and tRNAs, respectively. This chain is DNA-directed RNA polymerases I and III subunit RPAC2 (polr1d), found in Danio rerio (Zebrafish).